The chain runs to 248 residues: Cobalt transport protein CbiM (248 aa).

Positions 1–31 are cleaved as a signal peptide; that stretch reads MLKVIKKYRKFITFLMIGLVYTLAYPATAHA. A run of 6 helical transmembrane segments spans residues 39–59, 75–95, 107–127, 139–159, 173–195, and 213–233; these read LPPR…IYGL, VMLA…LPSV, LGTV…VLLF, TLGA…YAVW, LFLC…LAIV, and IYAI…VIVY.

Belongs to the CbiM family. In terms of assembly, forms an energy-coupling factor (ECF) transporter complex composed of an ATP-binding protein (A component, CbiO), a transmembrane protein (T component, CbiQ) and 2 possible substrate-capture proteins (S components, CbiM and CbiN) of unknown stoichimetry.

The protein localises to the cell membrane. It participates in cofactor biosynthesis; adenosylcobalamin biosynthesis. Its function is as follows. Part of the energy-coupling factor (ECF) transporter complex CbiMNOQ involved in cobalt import. This Limosilactobacillus reuteri (strain DSM 20016) (Lactobacillus reuteri) protein is Cobalt transport protein CbiM.